A 461-amino-acid chain; its full sequence is D-phenylhydantoinase (461 aa).

A divalent metal cation-binding residues include His59, His61, and Lys151. Lys151 is subject to N6-carboxylysine. Substrate is bound at residue Tyr156. Positions 182 and 239 each coordinate a divalent metal cation. Substrate is bound at residue Ser286. Asp313 serves as a coordination point for a divalent metal cation. Asn335 contributes to the substrate binding site.

This sequence belongs to the metallo-dependent hydrolases superfamily. Hydantoinase/dihydropyrimidinase family. In terms of assembly, homotetramer. The cofactor is a divalent metal cation. In terms of processing, carboxylation allows a single lysine to coordinate two divalent metal cations.

It carries out the reaction D-5-phenylhydantoin + H2O = N-carbamoyl-D-phenylglycine + H(+). In terms of biological role, catalyzes the stereospecific hydrolysis of the cyclic amide bond of D-hydantoin derivatives with an aromatic side chains at the 5'-position. Has no activity on dihydropyrimidines. The physiological function is unknown. The sequence is that of D-phenylhydantoinase from Shigella boydii serotype 4 (strain Sb227).